The chain runs to 313 residues: Ribosomal protein L11 methyltransferase (313 aa).

4 residues coordinate S-adenosyl-L-methionine: Thr-164, Gly-185, Asp-207, and Asn-249.

It belongs to the methyltransferase superfamily. PrmA family.

The protein resides in the cytoplasm. It carries out the reaction L-lysyl-[protein] + 3 S-adenosyl-L-methionine = N(6),N(6),N(6)-trimethyl-L-lysyl-[protein] + 3 S-adenosyl-L-homocysteine + 3 H(+). Its function is as follows. Methylates ribosomal protein L11. This chain is Ribosomal protein L11 methyltransferase, found in Clostridium botulinum (strain Eklund 17B / Type B).